Here is a 123-residue protein sequence, read N- to C-terminus: Large ribosomal subunit protein uL14 (123 aa).

This sequence belongs to the universal ribosomal protein uL14 family. Part of the 50S ribosomal subunit. Forms a cluster with proteins L3 and L19. In the 70S ribosome, L14 and L19 interact and together make contacts with the 16S rRNA in bridges B5 and B8.

Its function is as follows. Binds to 23S rRNA. Forms part of two intersubunit bridges in the 70S ribosome. In Yersinia pestis bv. Antiqua (strain Antiqua), this protein is Large ribosomal subunit protein uL14.